The chain runs to 254 residues: Short-chain dehydrogenase srdF (254 aa).

Positions 18, 37, 67, 95, 167, 171, 199, and 201 each coordinate NADP(+). Catalysis depends on tyrosine 167, which acts as the Proton donor. The active-site Lowers pKa of active site Tyr is lysine 171.

It belongs to the short-chain dehydrogenases/reductases (SDR) family.

In terms of biological role, short-chain dehydrogenase; part of the gene cluster that mediates the biosynthesis of sordarial, a salicylic aldehyde structurally related to the phytotoxin pyriculol. The most interesting aspect of this pathway is formation of an aromatic product from the highly reducing polyketide synthase srdA. SrdA synthesizes a reduced polyketide chain from one molecule of acetyl-CoA and five molecules of malonyl-CoA. The polyketide chain is then reductively released as an aldehyde. The oxidoreductases srdC, srdD and srdE then oxidize one of the hydroxy groups to facilitate the intramolecular aldol condensation, followed by dehydration to yield a salicylic aldehyde. This aldehyde can undergo facile reduction by endogenous reductases to yield the alcohol 1-hydroxy-2-hydroxymethyl-3-pent-1,3-dienylbenzene. The flavin-dependent srdI counteract against the propensity of the aldehydes to be reduced under physiological conditions and is responsible for reoxidizing 1-hydroxy-2-hydroxymethyl-3-pent-1,3-dienylbenzene back to the salicylic aldehyde. This salicylic aldehyde is then selectively epoxidized by the cupin-domain-containing oxidoreductase srdB to yield the epoxide, which can be hydrolyzed stereoselectively by the hydrolase srdG to give the final product sordarial. This chain is Short-chain dehydrogenase srdF, found in Neurospora crassa (strain ATCC 24698 / 74-OR23-1A / CBS 708.71 / DSM 1257 / FGSC 987).